A 144-amino-acid polypeptide reads, in one-letter code: MESPLGSDLARLVRIWRALIDHRLKPLELTQTHWVTLHNIHQLPPDQSQIQLAKAIGIEQPSLVRTLDQLEEKGLISRQTCASDRRAKRIKLTEKAEPLISEMEAVINKTRAEILHGISAEELEQLITLIAKLEHNIIELQAKG.

Positions 2–135 (ESPLGSDLAR…LITLIAKLEH (134 aa)) constitute an HTH marR-type domain. Residues 49–72 (QIQLAKAIGIEQPSLVRTLDQLEE) constitute a DNA-binding region (H-T-H motif).

The protein belongs to the SlyA family. Homodimer.

In terms of biological role, transcription regulator that can specifically activate or repress expression of target genes. The chain is Transcriptional regulator SlyA from Escherichia coli (strain 55989 / EAEC).